A 255-amino-acid polypeptide reads, in one-letter code: Aliphatic sulfonates import ATP-binding protein SsuB (255 aa).

The 222-residue stretch at 12–233 folds into the ABC transporter domain; sequence LLLNAVSKHY…RLGSVRLAEL (222 aa). ATP is bound at residue 44–51; sequence GRSGGGKS.

It belongs to the ABC transporter superfamily. Aliphatic sulfonates importer (TC 3.A.1.17.2) family. The complex is composed of two ATP-binding proteins (SsuB), two transmembrane proteins (SsuC) and a solute-binding protein (SsuA).

Its subcellular location is the cell inner membrane. The catalysed reaction is ATP + H2O + aliphatic sulfonate-[sulfonate-binding protein]Side 1 = ADP + phosphate + aliphatic sulfonateSide 2 + [sulfonate-binding protein]Side 1.. Its function is as follows. Part of the ABC transporter complex SsuABC involved in aliphatic sulfonates import. Responsible for energy coupling to the transport system. The sequence is that of Aliphatic sulfonates import ATP-binding protein SsuB from Shigella flexneri serotype 5b (strain 8401).